The primary structure comprises 220 residues: Ribosomal RNA small subunit methyltransferase G (220 aa).

Residues Gly-78, Leu-83, and Arg-144 each contribute to the S-adenosyl-L-methionine site.

Belongs to the methyltransferase superfamily. RNA methyltransferase RsmG family.

It localises to the cytoplasm. It catalyses the reaction guanosine(527) in 16S rRNA + S-adenosyl-L-methionine = N(7)-methylguanosine(527) in 16S rRNA + S-adenosyl-L-homocysteine. In terms of biological role, specifically methylates the N7 position of guanine in position 527 of 16S rRNA. The chain is Ribosomal RNA small subunit methyltransferase G from Alkalilimnicola ehrlichii (strain ATCC BAA-1101 / DSM 17681 / MLHE-1).